The chain runs to 508 residues: Aldehyde dehydrogenase family 7 member B4 (508 aa).

Position 244 to 249 (244 to 249 (GSSRVG)) interacts with NAD(+). Residue Glu266 is the Proton acceptor of the active site. The active-site Nucleophile is Cys300.

This sequence belongs to the aldehyde dehydrogenase family. As to quaternary structure, homotetramer.

The enzyme catalyses an aldehyde + NAD(+) + H2O = a carboxylate + NADH + 2 H(+). This is Aldehyde dehydrogenase family 7 member B4 (ALDH7B4) from Arabidopsis thaliana (Mouse-ear cress).